We begin with the raw amino-acid sequence, 683 residues long: MARTQVPDPATSAPAERALWLRDELERANYAYYVLDQPDLPDAEYDRLFKELQQIESEHPDLITPDSPTQRVGGEVASGFRPVVHDMPMLSLNNGFSDEDIAAFDKRVSDTLHHTPVDYACELKFDGLAISLRYVDGQFTQAATRGDGATGEDVTENVRTIRSIPLKLKGKRVPKLVDVRGEVLMFRRDFDKLNQRQRDAGQREFANPRNAAAGSLRQLDPKMTAQRPLSFFAYGIGVLDGIEMPGTHSELLDWYHEMGLPVNSERAVVQGAEGVLGFFHKVGEKRDKLPYDIDGVVYKVNRRDEQDALGFVSRAPRFALAHKFPAQEALTKLIAIDVQVGRTGAITPVARLEPVFVGGATVTNATLHNEDEVRRKDIRIGDTVIVRRAGDVIPEVVGALLERRPPDAREFVMPTQCPVCGSAIERLPDEAIARCSGGLFCPAQRKQALWHFAQRRALDIDGLGEKIIDQLVELNLVRTPADLFNLGFATLAELDRFAEKSAQNLIDSLEKAKHTTLARFIYALGIRHVGESTAKDLARHFGSLDPIMSATVEELLEVNDVGPIVAEAIHQFFAEEHNRTVIEQLRAPGKVTWAEGPPAPKAPQGVLAGKTVVLTGTLPNMGRDEAKELLEAAGAKVAGSVSKKTDYVVAGAEAGSKLAKAEELGIPVLDEDGMRKLLEGQTT.

NAD(+) is bound by residues 42-46, 91-92, and Glu-122; these read DAEYD and SL. The N6-AMP-lysine intermediate role is filled by Lys-124. 4 residues coordinate NAD(+): Arg-145, Glu-182, Lys-299, and Lys-323. The Zn(2+) site is built by Cys-417, Cys-420, Cys-435, and Cys-441. The BRCT domain maps to 602-683; that stretch reads APQGVLAGKT…MRKLLEGQTT (82 aa).

The protein belongs to the NAD-dependent DNA ligase family. LigA subfamily. It depends on Mg(2+) as a cofactor. Mn(2+) serves as cofactor.

It catalyses the reaction NAD(+) + (deoxyribonucleotide)n-3'-hydroxyl + 5'-phospho-(deoxyribonucleotide)m = (deoxyribonucleotide)n+m + AMP + beta-nicotinamide D-nucleotide.. DNA ligase that catalyzes the formation of phosphodiester linkages between 5'-phosphoryl and 3'-hydroxyl groups in double-stranded DNA using NAD as a coenzyme and as the energy source for the reaction. It is essential for DNA replication and repair of damaged DNA. In Paraburkholderia phymatum (strain DSM 17167 / CIP 108236 / LMG 21445 / STM815) (Burkholderia phymatum), this protein is DNA ligase.